A 155-amino-acid polypeptide reads, in one-letter code: UPF0266 membrane protein lin0773 (155 aa).

A run of 3 helical transmembrane segments spans residues 8 to 28, 46 to 66, and 70 to 90; these read IFLF…DAVI, RWDG…NTFF, and PFST…ICFF.

It belongs to the UPF0266 family.

It is found in the cell membrane. The sequence is that of UPF0266 membrane protein lin0773 from Listeria innocua serovar 6a (strain ATCC BAA-680 / CLIP 11262).